A 406-amino-acid polypeptide reads, in one-letter code: RING finger protein PSH1 (406 aa).

The RING-type zinc-finger motif lies at 30 to 72; that stretch reads CSICHDYMFVPMMTPCGHNYCYGCLNTWFASNTQKELACPQCR. Residues Ser-143 and Ser-191 each carry the phosphoserine modification. Residues 209–406 are disordered; that stretch reads RFASTNPFAN…RVVLGDSDDE (198 aa). Acidic residues-rich tracts occupy residues 223 to 232, 256 to 274, and 281 to 291; these read SSEDDDSSEE, AVDD…EEMD, and IEDDEDDEDED. Thr-310 carries the post-translational modification Phosphothreonine. Position 403 is a phosphoserine (Ser-403).

In terms of assembly, interacts with POB3 and SPT16.

The protein resides in the nucleus. In Saccharomyces cerevisiae (strain ATCC 204508 / S288c) (Baker's yeast), this protein is RING finger protein PSH1 (PSH1).